Consider the following 390-residue polypeptide: NADH-quinone oxidoreductase subunit H (390 aa).

Transmembrane regions (helical) follow at residues 4-24 (WLLT…ALLT), 78-98 (LVYT…FGGI), 120-140 (VLAL…GGWA), 157-177 (MISY…LVGS), 191-211 (GWMI…SFAE), 247-266 (YVNM…GGWR), 278-298 (IADI…FVFI), 315-337 (FGWK…YIAF), and 341-360 (WGWW…LLAL).

It belongs to the complex I subunit 1 family. As to quaternary structure, NDH-1 is composed of 15 different subunits. Subunits NuoA, H, J, K, L, M, N constitute the membrane sector of the complex.

The protein resides in the cell membrane. It catalyses the reaction a quinone + NADH + 5 H(+)(in) = a quinol + NAD(+) + 4 H(+)(out). In terms of biological role, NDH-1 shuttles electrons from NADH, via FMN and iron-sulfur (Fe-S) centers, to quinones in the respiratory chain. The immediate electron acceptor for the enzyme in this species is believed to be ubiquinone. Couples the redox reaction to proton translocation (for every two electrons transferred, four hydrogen ions are translocated across the cytoplasmic membrane), and thus conserves the redox energy in a proton gradient. This subunit may bind ubiquinone. This Deinococcus deserti (strain DSM 17065 / CIP 109153 / LMG 22923 / VCD115) protein is NADH-quinone oxidoreductase subunit H.